The chain runs to 221 residues: Probable N-acetyl-alpha-D-glucosaminyl L-malate deacetylase 2 (221 aa).

Residues H11, D14, and H125 each coordinate Zn(2+).

The protein belongs to the PIGL family. Requires Zn(2+) as cofactor.

The catalysed reaction is (S)-malyl N-acetyl-alpha-D-glucosaminide + H2O = (S)-malyl alpha-D-glucosaminide + acetate. Functionally, involved in bacillithiol (BSH) biosynthesis. Catalyzes the second step of the pathway, the deacetylation of N-acetylglucosaminylmalate (GlcNAc-Mal) to glucosamine malate (GlcN-Mal). The polypeptide is Probable N-acetyl-alpha-D-glucosaminyl L-malate deacetylase 2 (Bacillus subtilis (strain 168)).